Consider the following 185-residue polypeptide: dCTP deaminase (185 aa).

107-112 contributes to the dCTP binding site; that stretch reads KSTYAR. Catalysis depends on Glu133, which acts as the Proton donor/acceptor. The dCTP site is built by Gln152, Tyr166, and Gln176.

This sequence belongs to the dCTP deaminase family. As to quaternary structure, homotrimer.

It carries out the reaction dCTP + H2O + H(+) = dUTP + NH4(+). Its pathway is pyrimidine metabolism; dUMP biosynthesis; dUMP from dCTP (dUTP route): step 1/2. Catalyzes the deamination of dCTP to dUTP. This is dCTP deaminase from Nitratiruptor sp. (strain SB155-2).